The following is a 723-amino-acid chain: Beta-xylosidase (723 aa).

The N-terminal stretch at 1–19 is a signal peptide; that stretch reads MKKLWLMGLLLASFFTTVA.

It belongs to the glycosyl hydrolase 3 family.

The protein resides in the periplasm. Xylosidase involved in ulvan degradation. Ulvan is the main polysaccharide component of the Ulvales (green seaweed) cell wall. It is composed of disaccharide building blocks comprising 3-sulfated rhamnose (Rha3S) linked to D-glucuronic acid (GlcA), L-iduronic acid (IduA), or D-xylose (Xyl). Beta-xylosidase converts Xyl-Rha3S, a product of alpha-L-rhamnosidase acting on Rha-Xyl-Rha3S oligosaccharides, further to Xyl and Rha3S. The enzyme is able to degrade 4-methylumbelliferyl-beta-D-xylopyranoside (MUX) in vitro. This is Beta-xylosidase from Formosa agariphila (strain DSM 15362 / KCTC 12365 / LMG 23005 / KMM 3901 / M-2Alg 35-1).